Reading from the N-terminus, the 336-residue chain is Nitrilase (336 aa).

Residues 5-278 (LKVACVQAAP…EGLLYATLDP (274 aa)) enclose the CN hydrolase domain. The active-site Proton acceptor is the E45. K127 serves as the catalytic Proton donor. C161 serves as the catalytic Nucleophile.

This sequence belongs to the carbon-nitrogen hydrolase superfamily. Nitrilase family.

It catalyses the reaction a nitrile + 2 H2O = a carboxylate + NH4(+). The catalysed reaction is (indol-3-yl)acetonitrile + 2 H2O = (indol-3-yl)acetate + NH4(+). It carries out the reaction phenylpropanonitrile + 2 H2O = 3-phenylpropanoate + NH4(+). Functionally, arylacetonitrilase which is capable of hydrolyzing indole-3-acetonitrile (IAN) to the plant hormone indole-3-acetate (IAA), and allows the plant pathogenic bacterium to use IAN as a sole nitrogen source. Is also able to hydrolyze phenylpropionitrile (PPN), allowing the use of this compound as a sole nitrogen source. This enzyme may represent an additional mechanism for IAA biosynthesis or may be used to degrade and assimilate aldoximes and nitriles produced during host plant secondary metabolism. This Pseudomonas syringae pv. syringae (strain B728a) protein is Nitrilase.